We begin with the raw amino-acid sequence, 1039 residues long: Translation initiation factor IF-2 (1039 aa).

2 disordered regions span residues 39–347 (TISE…KWQE) and 400–452 (ARPP…PEKV). A compositionally biased stretch (polar residues) spans 103 to 125 (RNTTSNAPEASVANNQIASSEAN). Low complexity predominate over residues 157–176 (PQKPAAPEAEPEAQSQAPAK). Composition is skewed to basic and acidic residues over residues 178-197 (AVEK…ERQP) and 226-243 (PILK…DQAK). Residues 408-423 (ARSASAATAAPISSPT) show a composition bias toward low complexity. Residues 432–451 (NNRDQNRRQETEVKRERPEK) show a composition bias toward basic and acidic residues. The tr-type G domain maps to 533-706 (RRPPVVTIMG…LLVAEVGELS (174 aa)). The segment at 542–549 (GHVDHGKT) is G1. Residue 542–549 (GHVDHGKT) coordinates GTP. Residues 567–571 (GITQH) form a G2 region. The G3 stretch occupies residues 592-595 (DTPG). Residues 592–596 (DTPGH) and 646–649 (NKID) each bind GTP. The G4 stretch occupies residues 646 to 649 (NKID). The interval 682-684 (SAI) is G5.

It belongs to the TRAFAC class translation factor GTPase superfamily. Classic translation factor GTPase family. IF-2 subfamily.

It localises to the cytoplasm. In terms of biological role, one of the essential components for the initiation of protein synthesis. Protects formylmethionyl-tRNA from spontaneous hydrolysis and promotes its binding to the 30S ribosomal subunits. Also involved in the hydrolysis of GTP during the formation of the 70S ribosomal complex. The polypeptide is Translation initiation factor IF-2 (Nostoc sp. (strain PCC 7120 / SAG 25.82 / UTEX 2576)).